We begin with the raw amino-acid sequence, 967 residues long: Isoleucine--tRNA ligase 2 (967 aa).

Residues 58-68 carry the 'HIGH' region motif; it reads PYANGDIHIGH. The tract at residues 430 to 463 is disordered; sequence EADPGRADVTEEAGATGEARKVGKAEEAEEAGPV. L-isoleucyl-5'-AMP is bound at residue Glu598. Positions 639–643 match the 'KMSKS' region motif; that stretch reads KMSKS. An ATP-binding site is contributed by Lys642. Cys922, Cys925, Cys942, and Cys945 together coordinate Zn(2+).

Belongs to the class-I aminoacyl-tRNA synthetase family. IleS type 1 subfamily. Monomer. Zn(2+) is required as a cofactor.

The protein localises to the cytoplasm. It catalyses the reaction tRNA(Ile) + L-isoleucine + ATP = L-isoleucyl-tRNA(Ile) + AMP + diphosphate. Catalyzes the attachment of isoleucine to tRNA(Ile). As IleRS can inadvertently accommodate and process structurally similar amino acids such as valine, to avoid such errors it has two additional distinct tRNA(Ile)-dependent editing activities. One activity is designated as 'pretransfer' editing and involves the hydrolysis of activated Val-AMP. The other activity is designated 'posttransfer' editing and involves deacylation of mischarged Val-tRNA(Ile). This is Isoleucine--tRNA ligase 2 from Burkholderia pseudomallei (strain K96243).